The primary structure comprises 181 residues: Adenine phosphoribosyltransferase 2 (181 aa).

The residue at position 2 (S2) is an N-acetylserine.

Belongs to the purine/pyrimidine phosphoribosyltransferase family.

The protein localises to the cytoplasm. It carries out the reaction AMP + diphosphate = 5-phospho-alpha-D-ribose 1-diphosphate + adenine. Its pathway is purine metabolism; AMP biosynthesis via salvage pathway; AMP from adenine: step 1/1. In terms of biological role, catalyzes a salvage reaction resulting in the formation of AMP, that is energically less costly than de novo synthesis. May lack catalytic activity. This chain is Adenine phosphoribosyltransferase 2 (APT2), found in Saccharomyces cerevisiae (strain ATCC 204508 / S288c) (Baker's yeast).